Consider the following 114-residue polypeptide: Cytochrome c oxidase subunit 7A2-like, mitochondrial (114 aa).

The N-terminal 55 residues, 1-55 (MYYKFSGFTQKLAGAWASEAYSPQGLKPVVSTEAPPIIFATPTKLTSDSTVYDYA), are a transit peptide targeting the mitochondrion. N6-acetyllysine is present on Lys-69. A helical transmembrane segment spans residues 82 to 107 (PDQMLYRTTMALTVGGTIYCLIALYM).

This sequence belongs to the cytochrome c oxidase VIIa family. In terms of assembly, interacts with the mitochondrial respiratory complexes III (CIII) and IV (CIV), promoting their association.

Its subcellular location is the mitochondrion inner membrane. Assembly factor that mediates the formation of some mitochondrial respiratory supercomplexes (respirasomes), thereby promoting oxidative phosphorylation and energy metabolism. Acts as a molecular adapter that associates with both mitochondrial respiratory complexes III (CIII) and IV (CIV), promoting their association. Mediates the formation of various mitochondrial respiratory supercomplexes, such as MCIII(2)IV(2), composed of two CIII and two CIV, and the CS-respirasome (MCI(1)III(2)IV(2)), composed of one CI, two CIII and two CIV. Not involved in the formation of the canonical respirasome (MCI(1)III(2)IV(1)), composed of one CI, two CIII and one CIV. The formation of different respirasomes is important for cell adaptation to oxygen conditions and prevent metabolic exhaustion: supercomplexes mediated by COX7A2L/SCAF1 are required to maintain oxidative phosphorylation upon low oxygen conditions and promote metabolic rewiring toward glycolysis. This Homo sapiens (Human) protein is Cytochrome c oxidase subunit 7A2-like, mitochondrial.